Reading from the N-terminus, the 905-residue chain is MMNRFRKWLYKPKRSDPQLLAQFYYADEELNQVAAELDSLDGRKEPQRCTLLVSQFRSCQDNVLNIINQIMEECIPQDRAPRDFCVKFPEEIRHDNLAGQLWFGAECLAAGSIIMNRELESMAMRPLAKELTRSLEDVRGTLRDQALRDLNTYTEKMREALRRFDVLFAEFELSYVSAMVPVKSPREYYVQQEVIVLFCETVERALDFGYLTQDMIDDYEPALMFTIPRLAIVCGLVVYADGPLNLDRKVEDMSELFRPFHTLLRKIRDLLQALTEEELHTLERSLCVSQDVELPIRADTQAPSALAPTFSASLPPEETLSASANNPEAELACSMQYDDQELEELSRMVHRAGDEMSSLLSPPSACQSPAHRPGSEASPRGEASPARARLKSGSDEEERVFFMDDVEVTESPARPESPGNTFELTQGNAQQRGQDGQSGEVGVEAPALVKEEDWSNNNVEGDKIKLASLMGSTSCSCLDSQLYLDGWEVSAEDAETAEMIAHRTGGMKLSATVIFNPKSPTSQDSAVAAQEAPGHGTSPLEPRAEGTGDNSHKLSTTATNCLLHSCVCCGSCGDSRDDAVERLREKCGPGSVISASNPSVSLAKGGDKEPERIDEAQPSDVTLPAEDASNRQEPKAPASSKCLAHTSGPQVDTASRLQGEGEVKGQPEPEARKQDPEKSPVVSGDSPRGDVAQTEHQHLLGSSSTVGSCSLDNTRLDVATAAMPVTPMATREKIRSRFHGSHDLIHRLFVCISGVADQLQTNYASDLRSILKTLFEVMATKPETDDKEKLKKVTQTLRSAALEDCALCQETVSSSELAAKTRDGDFEDPPEWVPDEACGFCTSCKAPFTVIRRKHHCRSCGKIFCSRCSSHSAPLPRYGQVKPVRVCTHCYMFHVTPFYSDKTGM.

K87 participates in a covalent cross-link: Glycyl lysine isopeptide (Lys-Gly) (interchain with G-Cter in ubiquitin). S334 bears the Phosphoserine mark. Positions 354–441 are disordered; the sequence is DEMSSLLSPP…RGQDGQSGEV (88 aa). Polar residues-rich tracts occupy residues 358 to 367 and 418 to 437; these read SLLSPPSACQ and PGNT…QDGQ. T512 bears the Phosphothreonine mark. Disordered stretches follow at residues 516 to 552 and 589 to 691; these read NPKS…DNSH and PGSV…RGDV. Basic and acidic residues-rich tracts occupy residues 542–552 and 605–615; these read PRAEGTGDNSH and GGDKEPERIDE. Positions 647–656 are enriched in polar residues; it reads SGPQVDTASR. The span at 659 to 678 shows a compositional bias: basic and acidic residues; the sequence is GEGEVKGQPEPEARKQDPEK. The FYVE-type zinc-finger motif lies at 835-895; the sequence is DEACGFCTSC…VCTHCYMFHV (61 aa). Zn(2+) is bound by residues C841, C844, C857, C860, C865, C868, and C887. The residue at position 888 (T888) is a Phosphothreonine; by MAP2K. A Zn(2+)-binding site is contributed by C890.

This sequence belongs to the lst-2 family. In terms of assembly, interacts with TRIM3. In terms of processing, monoubiquitination at Lys-87 prevents binding to phosphatidylinositol 3-phosphate (PI3P) and localization to early endosome membranes. In terms of tissue distribution, enriched in brain (at protein level).

Its subcellular location is the cytoplasm. It is found in the cytosol. The protein localises to the early endosome membrane. In terms of biological role, negative regulator of epidermal growth factor receptor (EGFR) signaling. Acts by promoting EGFR degradation in endosomes when not monoubiquitinated. The chain is Lateral signaling target protein 2 homolog (Zfyve28) from Mus musculus (Mouse).